The following is a 350-amino-acid chain: Phosphoribosylformylglycinamidine cyclo-ligase (350 aa).

It belongs to the AIR synthase family.

Its subcellular location is the cytoplasm. The catalysed reaction is 2-formamido-N(1)-(5-O-phospho-beta-D-ribosyl)acetamidine + ATP = 5-amino-1-(5-phospho-beta-D-ribosyl)imidazole + ADP + phosphate + H(+). Its pathway is purine metabolism; IMP biosynthesis via de novo pathway; 5-amino-1-(5-phospho-D-ribosyl)imidazole from N(2)-formyl-N(1)-(5-phospho-D-ribosyl)glycinamide: step 2/2. This Cupriavidus taiwanensis (strain DSM 17343 / BCRC 17206 / CCUG 44338 / CIP 107171 / LMG 19424 / R1) (Ralstonia taiwanensis (strain LMG 19424)) protein is Phosphoribosylformylglycinamidine cyclo-ligase.